Here is a 108-residue protein sequence, read N- to C-terminus: T-cell acute lymphocytic leukemia protein 2 (108 aa).

One can recognise a bHLH domain in the interval 2-54; the sequence is TRKIFTNTRERWRQQNVNSAFAKLRKLIPTHPPDKKLSKNETLRLAMRYINFL. A disordered region spans residues 89–108; it reads DRTLLENYQVPSPGPSHHIP.

In Homo sapiens (Human), this protein is T-cell acute lymphocytic leukemia protein 2 (TAL2).